Here is a 509-residue protein sequence, read N- to C-terminus: ATP synthase subunit alpha 1 (509 aa).

172-179 (GDRQTGKT) provides a ligand contact to ATP.

The protein belongs to the ATPase alpha/beta chains family. As to quaternary structure, F-type ATPases have 2 components, CF(1) - the catalytic core - and CF(0) - the membrane proton channel. CF(1) has five subunits: alpha(3), beta(3), gamma(1), delta(1), epsilon(1). CF(0) has four main subunits: a(1), b(1), b'(1) and c(9-12).

It localises to the cell inner membrane. The catalysed reaction is ATP + H2O + 4 H(+)(in) = ADP + phosphate + 5 H(+)(out). Its function is as follows. Produces ATP from ADP in the presence of a proton gradient across the membrane. The alpha chain is a regulatory subunit. This Dinoroseobacter shibae (strain DSM 16493 / NCIMB 14021 / DFL 12) protein is ATP synthase subunit alpha 1.